The following is a 176-amino-acid chain: MKFLFDLFPIILFFAAFKVWGIFTATAVAIVATLAQVAWVAFRHRKVDTMLWVSLGVIVVFGGATLVLHDEKFIQWKPTVLYWLFAIGLLAARYAFGNNLIEKMMGKQLTLPHPVWDKLNVAWALFFAVLGVANLYVVHNFTESQWVNFKLFGTTGAMVVFIILQSLWLTKYLKDE.

Helical transmembrane passes span 3 to 23 (FLFD…WGIF), 24 to 44 (TATA…AFRH), 49 to 69 (TMLW…LVLH), 81 to 101 (LYWL…NNLI), 121 to 141 (VAWA…VHNF), and 149 to 169 (FKLF…SLWL).

It belongs to the YciB family.

The protein resides in the cell inner membrane. Functionally, plays a role in cell envelope biogenesis, maintenance of cell envelope integrity and membrane homeostasis. In Burkholderia lata (strain ATCC 17760 / DSM 23089 / LMG 22485 / NCIMB 9086 / R18194 / 383), this protein is Inner membrane-spanning protein YciB.